Here is a 163-residue protein sequence, read N- to C-terminus: EF-hand calcium-binding domain-containing protein 11 (163 aa).

EF-hand domains lie at 18-53 (SEHR…LFGY), 91-126 (RYRN…VAPK), and 127-162 (LPER…GQKE). Residues aspartate 140, aspartate 142, aspartate 144, histidine 146, and aspartate 151 each contribute to the Ca(2+) site.

The chain is EF-hand calcium-binding domain-containing protein 11 (EFCAB11) from Homo sapiens (Human).